Consider the following 239-residue polypeptide: 1-(5-phosphoribosyl)-5-[(5-phosphoribosylamino)methylideneamino] imidazole-4-carboxamide isomerase (239 aa).

Asp-8 (proton acceptor) is an active-site residue. Residue Asp-129 is the Proton donor of the active site.

The protein belongs to the HisA/HisF family.

The protein localises to the cytoplasm. The enzyme catalyses 1-(5-phospho-beta-D-ribosyl)-5-[(5-phospho-beta-D-ribosylamino)methylideneamino]imidazole-4-carboxamide = 5-[(5-phospho-1-deoxy-D-ribulos-1-ylimino)methylamino]-1-(5-phospho-beta-D-ribosyl)imidazole-4-carboxamide. It functions in the pathway amino-acid biosynthesis; L-histidine biosynthesis; L-histidine from 5-phospho-alpha-D-ribose 1-diphosphate: step 4/9. In Bacillus anthracis (strain A0248), this protein is 1-(5-phosphoribosyl)-5-[(5-phosphoribosylamino)methylideneamino] imidazole-4-carboxamide isomerase.